The primary structure comprises 540 residues: GMP synthase [glutamine-hydrolyzing] (540 aa).

Residues 26 to 216 form the Glutamine amidotransferase type-1 domain; sequence IIIILDFGSQ…VYHICECEPT (191 aa). Cys-103 acts as the Nucleophile in catalysis. Active-site residues include His-190 and Glu-192. The GMPS ATP-PPase domain occupies 217 to 415; sequence WTTAAFVEEA…VGLPEEIVQR (199 aa). Residue 244 to 250 coordinates ATP; that stretch reads SGGVDSS.

In terms of assembly, homodimer.

It catalyses the reaction XMP + L-glutamine + ATP + H2O = GMP + L-glutamate + AMP + diphosphate + 2 H(+). It functions in the pathway purine metabolism; GMP biosynthesis; GMP from XMP (L-Gln route): step 1/1. Functionally, catalyzes the synthesis of GMP from XMP. This chain is GMP synthase [glutamine-hydrolyzing], found in Nostoc sp. (strain PCC 7120 / SAG 25.82 / UTEX 2576).